The sequence spans 153 residues: H/ACA ribonucleoprotein complex subunit 2 (153 aa).

A Glycyl lysine isopeptide (Lys-Gly) (interchain with G-Cter in SUMO2) cross-link involves residue K3. A Glycyl lysine isopeptide (Lys-Gly) (interchain with G-Cter in SUMO); alternate cross-link involves residue K5. A Glycyl lysine isopeptide (Lys-Gly) (interchain with G-Cter in SUMO1); alternate cross-link involves residue K5. Residue K5 forms a Glycyl lysine isopeptide (Lys-Gly) (interchain with G-Cter in SUMO2); alternate linkage. S19 is modified (phosphoserine).

Belongs to the eukaryotic ribosomal protein eL8 family. Part of the H/ACA small nucleolar ribonucleoprotein (H/ACA snoRNP) complex, which contains NHP2/NOLA2, GAR1/NOLA1, NOP10/NOLA3, and DKC1/NOLA4, which is presumed to be the catalytic subunit. The complex contains a stable core formed by binding of one or two NOP10-DKC1 heterodimers to NHP2; GAR1 subsequently binds to this core via DKC1. The complex binds a box H/ACA small nucleolar RNA (snoRNA), which may target the specific site of modification within the RNA substrate. During assembly, the complex contains NAF1 instead of GAR1/NOLA1. The complex also interacts with TERC, which contains a 3'-terminal domain related to the box H/ACA snoRNAs. Specific interactions with snoRNAs or TERC are mediated by GAR1 and NHP2. Associates with NOLC1/NOPP140. H/ACA snoRNPs interact with the SMN complex, consisting of SMN1 or SMN2, GEMIN2/SIP1, DDX20/GEMIN3, and GEMIN4. This is mediated by interaction between GAR1 and SMN1 or SMN2. The SMN complex may be required for correct assembly of the H/ACA snoRNP complex. Component of the telomerase holoenzyme complex composed of one molecule of TERT, one molecule of WRAP53/TCAB1, two molecules of H/ACA ribonucleoprotein complex subunits DKC1, NOP10, NHP2 and GAR1, and a telomerase RNA template component (TERC). The telomerase holoenzyme complex is associated with TEP1, SMG6/EST1A and POT1.

The protein resides in the nucleus. The protein localises to the nucleolus. It is found in the cajal body. In terms of biological role, required for ribosome biogenesis and telomere maintenance. Part of the H/ACA small nucleolar ribonucleoprotein (H/ACA snoRNP) complex, which catalyzes pseudouridylation of rRNA. This involves the isomerization of uridine such that the ribose is subsequently attached to C5, instead of the normal N1. Each rRNA can contain up to 100 pseudouridine ('psi') residues, which may serve to stabilize the conformation of rRNAs. May also be required for correct processing or intranuclear trafficking of TERC, the RNA component of the telomerase reverse transcriptase (TERT) holoenzyme. In Mus musculus (Mouse), this protein is H/ACA ribonucleoprotein complex subunit 2 (Nhp2).